The following is a 316-amino-acid chain: Pantothenate kinase (316 aa).

95 to 102 (GSVAVGKS) is a binding site for ATP.

Belongs to the prokaryotic pantothenate kinase family.

It localises to the cytoplasm. The enzyme catalyses (R)-pantothenate + ATP = (R)-4'-phosphopantothenate + ADP + H(+). The protein operates within cofactor biosynthesis; coenzyme A biosynthesis; CoA from (R)-pantothenate: step 1/5. The polypeptide is Pantothenate kinase (Shigella boydii serotype 18 (strain CDC 3083-94 / BS512)).